Here is a 464-residue protein sequence, read N- to C-terminus: MSRFVPRIIPFYLLLLVAGGTANAQSTFEQKAANPFDNNNDGLPDLGMAPENHDGEKHFAEIVKDFGETSMNDNGLDTGEQAKAFALGKVRDALSQQVNQHVESWLSPWGNASVDVKVDNEGHFTGSRGSWFVPLQDNDRYLTWSQLGLTQQDNGLVSNVGVGQRWARGNWLVGYNTFYDNLLDENLQRAGFGAEAWGEYLRLSANFYQPFAAWHEQTATQEQRMARGYDLTARMRMPFYQHLNTSVSLEQYFGDRVDLFNSGTGYHNPVALSLGLNYTPVPLVTVTAQHKQGESGENQNNLGLNLNYRFGVPLKKQLSAGEVAESQSLRGSRYDNPQRNNLPTLEYRQRKTLTVFLATPPWDLKPGETVPLKLQIRSRYGIRQLIWQGDTQILSLTPGAQANSAEGWTLIMPDWQNGEGASNHWRLSVVVEDNQGQRVSSNEITLTLVEPFDALSNDELRWEP.

The signal sequence occupies residues 1–24 (MSRFVPRIIPFYLLLLVAGGTANA).

The protein belongs to the intimin/invasin family.

It localises to the periplasm. This is an uncharacterized protein from Escherichia coli (strain K12).